The primary structure comprises 156 residues: Ribosomal RNA large subunit methyltransferase H (156 aa).

S-adenosyl-L-methionine contacts are provided by residues Leu73, Gly104, and 123–128 (LSPLTL).

Belongs to the RNA methyltransferase RlmH family. Homodimer.

The protein localises to the cytoplasm. The enzyme catalyses pseudouridine(1915) in 23S rRNA + S-adenosyl-L-methionine = N(3)-methylpseudouridine(1915) in 23S rRNA + S-adenosyl-L-homocysteine + H(+). Functionally, specifically methylates the pseudouridine at position 1915 (m3Psi1915) in 23S rRNA. The polypeptide is Ribosomal RNA large subunit methyltransferase H (Yersinia enterocolitica serotype O:8 / biotype 1B (strain NCTC 13174 / 8081)).